Here is a 161-residue protein sequence, read N- to C-terminus: Large ribosomal subunit protein uL15 (161 aa).

Residues 1-43 (MKLSEIADNVGSRKKRMRIGRGIGSGKGKTGGRGGKGQTARSG) are disordered. The segment covering 21–37 (RGIGSGKGKTGGRGGKG) has biased composition (gly residues).

As to quaternary structure, part of the 50S ribosomal subunit.

Functionally, binds to the 23S rRNA. In Rhodopseudomonas palustris (strain ATCC BAA-98 / CGA009), this protein is Large ribosomal subunit protein uL15.